Reading from the N-terminus, the 271-residue chain is Putative mitochondrial carrier protein PET8 (271 aa).

Solcar repeat units follow at residues 3–76 (STFL…MKQQ), 91–177 (AEVL…LKKK), and 187–270 (VSAW…VHSL). 6 consecutive transmembrane segments (helical) span residues 6 to 26 (LASL…FFPI), 51 to 71 (GLGS…VTYD), 97 to 117 (MLSS…AEVI), 152 to 168 (GWWT…CIQF), 193 to 213 (AVCG…LDVL), and 251 to 271 (MWIS…HSLF).

It belongs to the mitochondrial carrier (TC 2.A.29) family.

It is found in the mitochondrion inner membrane. This is Putative mitochondrial carrier protein PET8 (PET8) from Eremothecium gossypii (strain ATCC 10895 / CBS 109.51 / FGSC 9923 / NRRL Y-1056) (Yeast).